A 384-amino-acid chain; its full sequence is Spermidine/putrescine import ATP-binding protein PotA (384 aa).

Residues 6–238 (ITFNNVSKTF…PINHFVANFI (233 aa)) enclose the ABC transporter domain. 40–47 (GASGSGKS) contacts ATP.

It belongs to the ABC transporter superfamily. Spermidine/putrescine importer (TC 3.A.1.11.1) family. As to quaternary structure, the complex is composed of two ATP-binding proteins (PotA), two transmembrane proteins (PotB and PotC) and a solute-binding protein (PotD).

It localises to the cell membrane. The catalysed reaction is ATP + H2O + polyamine-[polyamine-binding protein]Side 1 = ADP + phosphate + polyamineSide 2 + [polyamine-binding protein]Side 1.. Functionally, part of the ABC transporter complex PotABCD involved in spermidine/putrescine import. Responsible for energy coupling to the transport system. The polypeptide is Spermidine/putrescine import ATP-binding protein PotA (Streptococcus pyogenes serotype M6 (strain ATCC BAA-946 / MGAS10394)).